Reading from the N-terminus, the 330-residue chain is Phosphate acyltransferase (330 aa).

The protein belongs to the PlsX family. As to quaternary structure, homodimer. Probably interacts with PlsY.

It is found in the cytoplasm. It carries out the reaction a fatty acyl-[ACP] + phosphate = an acyl phosphate + holo-[ACP]. It functions in the pathway lipid metabolism; phospholipid metabolism. Catalyzes the reversible formation of acyl-phosphate (acyl-PO(4)) from acyl-[acyl-carrier-protein] (acyl-ACP). This enzyme utilizes acyl-ACP as fatty acyl donor, but not acyl-CoA. This is Phosphate acyltransferase from Lactobacillus delbrueckii subsp. bulgaricus (strain ATCC 11842 / DSM 20081 / BCRC 10696 / JCM 1002 / NBRC 13953 / NCIMB 11778 / NCTC 12712 / WDCM 00102 / Lb 14).